The sequence spans 451 residues: CBL-interacting protein kinase 10 (451 aa).

One can recognise a Protein kinase domain in the interval 13–267 (YEIGKLLGQG…VSEIMEDPWF (255 aa)). Residues 19 to 27 (LGQGSFAKV) and Lys42 contribute to the ATP site. Catalysis depends on Asp135, which acts as the Proton acceptor. The tract at residues 153–182 (DFGLSALAECKRQDGLLHTTCGTPAYVAPE) is activation loop. The region spanning 304–336 (INEGKQEAENLTSLNAFDIISLSSGFDLSAMFE) is the NAF domain. The PPI stretch occupies residues 341–370 (KEESKFTSTNTATTITKKLEDVAKNLRLKF).

The protein belongs to the protein kinase superfamily. CAMK Ser/Thr protein kinase family. SNF1 subfamily. Mn(2+) serves as cofactor.

The enzyme catalyses L-seryl-[protein] + ATP = O-phospho-L-seryl-[protein] + ADP + H(+). The catalysed reaction is L-threonyl-[protein] + ATP = O-phospho-L-threonyl-[protein] + ADP + H(+). In terms of biological role, CIPK serine-threonine protein kinases interact with CBL proteins. Binding of a CBL protein to the regulatory NAF domain of CIPK protein lead to the activation of the kinase in a calcium-dependent manner. In Oryza sativa subsp. japonica (Rice), this protein is CBL-interacting protein kinase 10 (CIPK10).